A 317-amino-acid polypeptide reads, in one-letter code: Transaldolase (317 aa).

The active-site Schiff-base intermediate with substrate is the lysine 126.

It belongs to the transaldolase family. Type 1 subfamily. In terms of assembly, homodimer.

The protein localises to the cytoplasm. It catalyses the reaction D-sedoheptulose 7-phosphate + D-glyceraldehyde 3-phosphate = D-erythrose 4-phosphate + beta-D-fructose 6-phosphate. It participates in carbohydrate degradation; pentose phosphate pathway; D-glyceraldehyde 3-phosphate and beta-D-fructose 6-phosphate from D-ribose 5-phosphate and D-xylulose 5-phosphate (non-oxidative stage): step 2/3. Transaldolase is important for the balance of metabolites in the pentose-phosphate pathway. The sequence is that of Transaldolase from Burkholderia pseudomallei (strain K96243).